The primary structure comprises 1213 residues: Chitin synthase 3 (1213 aa).

The disordered stretch occupies residues 1–97; that stretch reads MSNFRDSSSP…TPPHQEEEED (97 aa). Over 1 to 168 the chain is Cytoplasmic; sequence MSNFRDSSSP…KPKHDIYFWK (168 aa). Residues 32–44 are compositionally biased toward basic and acidic residues; sequence IRPERSRMDESHP. Polar residues predominate over residues 75-87; sequence ELSTSRSHLSNYA. Residues 169-189 form a helical membrane-spanning segment; the sequence is VYCYAITFWAPAPLLKLFGLP. Residues 190–200 lie on the Extracellular side of the membrane; sequence TKDRQFAWREK. A helical transmembrane segment spans residues 201-221; sequence IGLISCILYVGAFVAYLTFGF. Over 222–450 the chain is Cytoplasmic; sequence TKTVCSSQVV…TDTIGCIASK (229 aa). A helical transmembrane segment spans residues 451-471; that stretch reads VVLYMSLVFILSVVVVKFIMA. Over 472 to 1016 the chain is Extracellular; the sequence is CWFKWVTSRK…INSTVHNLFE (545 aa). N-linked (GlcNAc...) asparagine glycosylation is found at Asn588 and Asn1008. A helical transmembrane segment spans residues 1017-1037; that stretch reads LVLVKDLCGTFCFSMQFVIFI. Residues 1038–1039 lie on the Cytoplasmic side of the membrane; that stretch reads EL. The helical transmembrane segment at 1040-1060 threads the bilayer; that stretch reads IGTLVLPAAITFTIYVIIVAI. Over 1061–1065 the chain is Extracellular; it reads VSKPT. Residues 1066 to 1086 form a helical membrane-spanning segment; sequence PVMSLVLLAVIFGLPGCLIVI. Residues 1087–1213 are Cytoplasmic-facing; the sequence is TVSSLSYLVY…LSQGSSSGSS (127 aa). The tract at residues 1161-1213 is disordered; the sequence is ERRSTENRKQQQQQQLTNNSSNNLAVPGAAWDPSNTGGNLIDDLSQGSSSGSS.

Belongs to the chitin synthase family. Class IV subfamily.

It localises to the cell membrane. It carries out the reaction [(1-&gt;4)-N-acetyl-beta-D-glucosaminyl](n) + UDP-N-acetyl-alpha-D-glucosamine = [(1-&gt;4)-N-acetyl-beta-D-glucosaminyl](n+1) + UDP + H(+). Its function is as follows. Polymerizes chitin, a structural polymer of the cell wall and septum, by transferring the sugar moiety of UDP-GlcNAc to the non-reducing end of the growing chitin polymer. In Candida albicans (Yeast), this protein is Chitin synthase 3 (CHS3).